The chain runs to 375 residues: Killer cell immunoglobulin-like receptor 2DL5B (375 aa).

The signal sequence occupies residues 1–21 (MSLMVVSMACVGFFLLQGAWT). Residues 22 to 238 (HEGGQDKPLL…PSSKTGIRRH (217 aa)) lie on the Extracellular side of the membrane. 2 consecutive Ig-like C2-type domains span residues 42–102 (GGHV…HPRS) and 137–200 (GENV…LHDS). Cystine bridges form between C49–C95 and C144–C193. The tract at residues 213–233 (VSVTGNSSSSSSSPTEPSSKT) is disordered. A glycan (N-linked (GlcNAc...) asparagine) is linked at N218. Residues 219–231 (SSSSSSSPTEPSS) are compositionally biased toward low complexity. Residues 239–259 (LHILIGTSVAIILFIILFFFL) traverse the membrane as a helical segment. The Cytoplasmic portion of the chain corresponds to 260–375 (LHCCCSNKKN…ASSHVPAAGI (116 aa)). The interval 334–375 (AKPRSLSPAHKHHSQALRGSSRETTALSQNRVASSHVPAAGI) is disordered. Residues 355 to 366 (RETTALSQNRVA) show a composition bias toward polar residues.

The protein belongs to the immunoglobulin superfamily.

The protein resides in the cell membrane. Receptor on natural killer (NK) cells for HLA-C alleles. Inhibits the activity of NK cells thus preventing cell lysis. The polypeptide is Killer cell immunoglobulin-like receptor 2DL5B (KIR2DL5B) (Homo sapiens (Human)).